The sequence spans 139 residues: Heavy metal-associated isoprenylated plant protein 13 (139 aa).

The HMA domain occupies 3–70 (PMKAVLQLSI…LCNTELVSVE (68 aa)). The disordered stretch occupies residues 70–94 (EVVKPPEKKPEPEKPAPPKPAPAPA). Basic and acidic residues predominate over residues 73 to 85 (KPPEKKPEPEKPA). Cys-136 is subject to Cysteine methyl ester. Cys-136 is lipidated: S-farnesyl cysteine. A propeptide spans 137-139 (VIM) (removed in mature form).

Belongs to the HIPP family.

Functionally, probable heavy-metal-binding protein. This Arabidopsis thaliana (Mouse-ear cress) protein is Heavy metal-associated isoprenylated plant protein 13.